The sequence spans 444 residues: Acyl-CoA 6-desaturase (444 aa).

Residues 1–130 (MGKGGNQGEG…EDMNLFKTNH (130 aa)) are Cytoplasmic-facing. The 78-residue stretch at 18 to 95 (MPTFRWEEIQ…LKPLLIGELA (78 aa)) folds into the Cytochrome b5 heme-binding domain. Residues 131 to 151 (LFFFLLLSHIIVMESIAWFIL) traverse the membrane as a helical segment. The Lumenal portion of the chain corresponds to 152-157 (SYFGNG). A helical transmembrane segment spans residues 158–178 (WIPTVITAFVLATSQAQAGWL). Topologically, residues 179–264 (QHDYGHLSVY…KYLPYNHQHE (86 aa)) are cytoplasmic. Positions 180–184 (HDYGH) match the Histidine box-1 motif. The short motif at 217–221 (HFQHH) is the Histidine box-2 element. A helical transmembrane segment spans residues 265-285 (YFFLIGPPLLIPMYFQYQIIM). Residues 286 to 305 (TMIRRRDWVDLAWAISYYAR) lie on the Lumenal side of the membrane. The chain crosses the membrane as a helical span at residues 306–326 (FFYTYIPFYGILGALVFLNFI). Residues 327–444 (RFLESHWFVW…ELWLDAYLHK (118 aa)) are Cytoplasmic-facing. Residues 382-386 (QIEHH) carry the Histidine box-3 motif.

Belongs to the fatty acid desaturase type 1 family. As to expression, expressed in the liver and brain (at protein level). Highest activity is found in the liver and adrenals followed by the testes and other organs, absent in adipose tissue.

Its subcellular location is the endoplasmic reticulum membrane. It localises to the microsome membrane. It catalyses the reaction (9Z,12Z)-octadecadienoyl-CoA + 2 Fe(II)-[cytochrome b5] + O2 + 2 H(+) = (6Z,9Z,12Z)-octadecatrienoyl-CoA + 2 Fe(III)-[cytochrome b5] + 2 H2O. It carries out the reaction (9Z,12Z,15Z)-octadecatrienoyl-CoA + 2 Fe(II)-[cytochrome b5] + O2 + 2 H(+) = (6Z,9Z,12Z,15Z)-octadecatetraenoyl-CoA + 2 Fe(III)-[cytochrome b5] + 2 H2O. The catalysed reaction is (9Z,12Z,15Z,18Z,21Z)-tetracosapentaenoyl-CoA + 2 Fe(II)-[cytochrome b5] + O2 + 2 H(+) = (6Z,9Z,12Z,15Z,18Z,21Z)-tetracosahexaenoyl-CoA + 2 Fe(III)-[cytochrome b5] + 2 H2O. The enzyme catalyses (11E)-octadecenoyl-CoA + 2 Fe(II)-[cytochrome b5] + O2 + 2 H(+) = (6Z,11E)-octadecadienoyl-CoA + 2 Fe(III)-[cytochrome b5] + 2 H2O. It catalyses the reaction (11Z,14Z)-eicosadienoyl-CoA + 2 Fe(II)-[cytochrome b5] + O2 + 2 H(+) = (8Z,11Z,14Z)-eicosatrienoyl-CoA + 2 Fe(III)-[cytochrome b5] + 2 H2O. It carries out the reaction (11Z,14Z,17Z)-eicosatrienoyl-CoA + 2 Fe(II)-[cytochrome b5] + O2 + 2 H(+) = (8Z,11Z,14Z,17Z)-eicosatetraenoyl-CoA + 2 Fe(III)-[cytochrome b5] + 2 H2O. It functions in the pathway lipid metabolism; polyunsaturated fatty acid biosynthesis. Functionally, involved in the biosynthesis of highly unsaturated fatty acids (HUFA) from the essential polyunsaturated fatty acids (PUFA) linoleic acid (LA) (18:2n-6) and alpha-linolenic acid (ALA) (18:3n-3) precursors, acting as a fatty acyl-coenzyme A (CoA) desaturase that introduces a cis double bond at carbon 6 of the fatty acyl chain. Catalyzes the first and rate limiting step in this pathway which is the desaturation of LA (18:2n-6) and ALA (18:3n-3) into gamma-linoleate (GLA) (18:3n-6) and stearidonate (18:4n-3), respectively. Subsequently, in the biosynthetic pathway of HUFA n-3 series, it desaturates tetracosapentaenoate (24:5n-3) to tetracosahexaenoate (24:6n-3), which is then converted to docosahexaenoate (DHA)(22:6n-3), an important lipid for nervous system function. It can also desaturate (11E)-octadecenoate (trans-vaccenoate) at carbon 6 generating (6Z,11E)-octadecadienoate. In addition to Delta-6 activity, this enzyme exhibits Delta-8 activity with slight biases toward n-3 fatty acyl-CoA substrates. The sequence is that of Acyl-CoA 6-desaturase (Fads2) from Rattus norvegicus (Rat).